The chain runs to 314 residues: tRNA pseudouridine synthase B (314 aa).

Substrate is bound at residue His-43. The active-site Nucleophile is the Asp-48. Substrate contacts are provided by Tyr-76, Tyr-179, and Leu-200.

The protein belongs to the pseudouridine synthase TruB family. Type 1 subfamily.

It catalyses the reaction uridine(55) in tRNA = pseudouridine(55) in tRNA. Responsible for synthesis of pseudouridine from uracil-55 in the psi GC loop of transfer RNAs. This chain is tRNA pseudouridine synthase B, found in Serratia proteamaculans (strain 568).